A 132-amino-acid polypeptide reads, in one-letter code: ATP synthase epsilon chain (132 aa).

It belongs to the ATPase epsilon chain family. F-type ATPases have 2 components, CF(1) - the catalytic core - and CF(0) - the membrane proton channel. CF(1) has five subunits: alpha(3), beta(3), gamma(1), delta(1), epsilon(1). CF(0) has three main subunits: a, b and c.

The protein resides in the cell membrane. Functionally, produces ATP from ADP in the presence of a proton gradient across the membrane. This chain is ATP synthase epsilon chain, found in Desulforamulus reducens (strain ATCC BAA-1160 / DSM 100696 / MI-1) (Desulfotomaculum reducens).